The chain runs to 137 residues: Mobilization protein B (137 aa).

Interacts with MobA and MobC to form the relaxosome.

This protein is essential to promote the specific transfer of the plasmid in the presence of conjugative plasmids. The polypeptide is Mobilization protein B (mobB) (Escherichia coli).